A 1268-amino-acid polypeptide reads, in one-letter code: Vigilin (1268 aa).

S2 bears the N-acetylserine mark. Phosphothreonine is present on T8. Phosphoserine is present on residues S11 and S31. 7 consecutive KH domains span residues 150–212 (QASA…RHEV), 222–284 (RAVE…VARI), 295–357 (TTTI…LTEV), 364–424 (FTVS…QEQI), 435–497 (MDYV…KREL), 507–570 (ERTK…TKYM), and 581–643 (SYSI…RSRI). Phosphothreonine is present on residues T295 and T296. Phosphoserine is present on S317. A Phosphotyrosine modification is found at Y437. The residue at position 645 (S645) is a Phosphoserine. KH domains lie at 653–716 (IAEV…KKQL), 727–790 (SFTV…QKEL), 800–863 (VVED…KKRI), 873–967 (QVTV…KEAL), 972–1034 (PVTI…KAGL), 1052–1117 (SFKL…RDAI), and 1127–1190 (MVSE…IDHI). A disordered region spans residues 910–947 (PDREENPVHSVEPSIQENGDEAGEGREAKETDPGSPRR). Residues 932–947 (GEGREAKETDPGSPRR) are compositionally biased toward basic and acidic residues. Residue K991 is modified to N6-acetyllysine. Residues 1213-1268 (PPAHEESRAPSKGFVVRDAPWTSNSSEKAPDMSSSEEFPSFGAQVAPKTLPWGPKR) form a disordered region. Positions 1233-1249 (WTSNSSEKAPDMSSSEE) are enriched in polar residues. 2 positions are modified to phosphoserine: S1247 and S1252.

Its subcellular location is the cytoplasm. The protein localises to the nucleus. Appears to play a role in cell sterol metabolism. It may function to protect cells from over-accumulation of cholesterol. This chain is Vigilin (Hdlbp), found in Mus musculus (Mouse).